The following is a 446-amino-acid chain: Histidine--tRNA ligase (446 aa).

It belongs to the class-II aminoacyl-tRNA synthetase family. As to quaternary structure, homodimer.

The protein resides in the cytoplasm. It catalyses the reaction tRNA(His) + L-histidine + ATP = L-histidyl-tRNA(His) + AMP + diphosphate + H(+). In Burkholderia lata (strain ATCC 17760 / DSM 23089 / LMG 22485 / NCIMB 9086 / R18194 / 383), this protein is Histidine--tRNA ligase.